A 314-amino-acid polypeptide reads, in one-letter code: Putative 4-hydroxy-2-oxoglutarate aldolase, mitochondrial (314 aa).

A substrate-binding site is contributed by 50-51 (TN). K171 serves as the catalytic Schiff-base intermediate with substrate.

It belongs to the DapA family.

The enzyme catalyses (4S)-4-hydroxy-2-oxoglutarate = glyoxylate + pyruvate. The catalysed reaction is (4R)-4-hydroxy-2-oxoglutarate = glyoxylate + pyruvate. In terms of biological role, may catalyze the final step in the metabolic pathway of hydroxyproline. The polypeptide is Putative 4-hydroxy-2-oxoglutarate aldolase, mitochondrial (Coccidioides immitis (strain RS) (Valley fever fungus)).